Reading from the N-terminus, the 412-residue chain is DnaJ homolog subfamily A member 2 (412 aa).

The 63-residue stretch at 8-70 (KLYDILGVPP…EKRELYDRYG (63 aa)) folds into the J domain. An N6-acetyllysine modification is found at K39. Phosphoserine is present on residues S78 and S123. Residues 130–214 (GKTTKLQLSK…CEGKKVIKEV (85 aa)) form a CR-type zinc finger. K134 participates in a covalent cross-link: Glycyl lysine isopeptide (Lys-Gly) (interchain with G-Cter in SUMO2). Zn(2+) is bound by residues C143 and C146. The CXXCXGXG motif repeat unit spans residues 143–150 (CSACSGQG). Residue K152 is modified to N6-acetyllysine. Positions 159, 162, 186, 189, 202, and 205 each coordinate Zn(2+). CXXCXGXG motif repeat units lie at residues 159–166 (CSACRGRG), 186–193 (CSDCNGEG), and 202–209 (CKKCEGKK). The disordered stretch occupies residues 365 to 412 (IGETEEVELQEFDSTRGSGGGQRREAYNDSSDEESSSHHGPGVQCAHQ). A Phosphotyrosine modification is found at Y391. 2 positions are modified to phosphoserine: S394 and S395. C409 bears the Cysteine methyl ester mark. C409 carries the S-farnesyl cysteine lipid modification. The propeptide at 410 to 412 (AHQ) is removed in mature form.

The protein resides in the membrane. In terms of biological role, co-chaperone of Hsc70. Stimulates ATP hydrolysis and the folding of unfolded proteins mediated by HSPA1A/B (in vitro). The sequence is that of DnaJ homolog subfamily A member 2 (DNAJA2) from Homo sapiens (Human).